Consider the following 57-residue polypeptide: Conotoxin Cal6.34 (57 aa).

The first 22 residues, 1 to 22 (MKLTCVLIVAVLILTACQVIAA), serve as a signal peptide directing secretion. 3 disulfide bridges follow: Cys-26–Cys-37, Cys-29–Cys-43, and Cys-36–Cys-54.

The protein belongs to the conotoxin O1 superfamily. As to expression, expressed by the venom duct.

Its subcellular location is the secreted. Its function is as follows. Probable neurotoxin. This Californiconus californicus (California cone) protein is Conotoxin Cal6.34.